Reading from the N-terminus, the 194-residue chain is 3-isopropylmalate dehydratase small subunit (194 aa).

It belongs to the LeuD family. LeuD type 1 subfamily. In terms of assembly, heterodimer of LeuC and LeuD.

The catalysed reaction is (2R,3S)-3-isopropylmalate = (2S)-2-isopropylmalate. It functions in the pathway amino-acid biosynthesis; L-leucine biosynthesis; L-leucine from 3-methyl-2-oxobutanoate: step 2/4. Catalyzes the isomerization between 2-isopropylmalate and 3-isopropylmalate, via the formation of 2-isopropylmaleate. In Brevibacillus brevis (strain 47 / JCM 6285 / NBRC 100599), this protein is 3-isopropylmalate dehydratase small subunit.